The sequence spans 396 residues: Elongation factor Tu (396 aa).

In terms of domain architecture, tr-type G spans 10 to 206; that stretch reads KPHVNVGTIG…ALDTYIPTPE (197 aa). Residues 19–26 are G1; it reads GHVDHGKT. 19-26 lines the GTP pocket; it reads GHVDHGKT. A Mg(2+)-binding site is contributed by T26. Residues 60-64 form a G2 region; sequence GITIN. The G3 stretch occupies residues 81-84; that stretch reads DCPG. GTP contacts are provided by residues 81 to 85 and 136 to 139; these read DCPGH and NKCD. A G4 region spans residues 136–139; the sequence is NKCD. The segment at 174–176 is G5; that stretch reads SAK.

The protein belongs to the TRAFAC class translation factor GTPase superfamily. Classic translation factor GTPase family. EF-Tu/EF-1A subfamily. Monomer.

The protein localises to the cytoplasm. It catalyses the reaction GTP + H2O = GDP + phosphate + H(+). Its function is as follows. GTP hydrolase that promotes the GTP-dependent binding of aminoacyl-tRNA to the A-site of ribosomes during protein biosynthesis. This chain is Elongation factor Tu, found in Cupriavidus necator (strain ATCC 17699 / DSM 428 / KCTC 22496 / NCIMB 10442 / H16 / Stanier 337) (Ralstonia eutropha).